A 1025-amino-acid polypeptide reads, in one-letter code: Multidrug resistance protein MdtC (1025 aa).

Helical transmembrane passes span 3-23 (FFAL…AITL), 333-353 (EVEQ…FLFL), 360-380 (IIPA…MYLC), 387-407 (LSLM…IVVL), 431-451 (VGFT…PLLL), 463-483 (FAVT…TLTP), 528-548 (LVGV…ISIP), 853-873 (VILI…LYES), 875-895 (VHPL…LLAL), 897-917 (LFNA…IGIV), 953-973 (PIMM…LSGG), and 984-1004 (ITIV…TPVV).

The protein belongs to the resistance-nodulation-cell division (RND) (TC 2.A.6) family. MdtC subfamily. As to quaternary structure, part of a tripartite efflux system composed of MdtA, MdtB and MdtC. MdtC forms a heteromultimer with MdtB.

The protein resides in the cell inner membrane. Its function is as follows. The MdtABC tripartite complex confers resistance against novobiocin and deoxycholate. In Escherichia coli O8 (strain IAI1), this protein is Multidrug resistance protein MdtC.